We begin with the raw amino-acid sequence, 190 residues long: Nascent polypeptide-associated complex subunit alpha (190 aa).

2 disordered regions span residues 20-42 and 123-155; these read FDSD…AERK and SLQN…VDAK. Basic and acidic residues predominate over residues 30-40; the sequence is HASDKVASRAE. One can recognise an NAC-A/B domain in the interval 37-102; that stretch reads SRAERKSRKA…AKAEDMSQLA (66 aa). Over residues 138 to 151 the composition is skewed to acidic residues; the sequence is EEEEDDDSPIDEEG. Residues 152–189 form the UBA domain; the sequence is VDAKDIDLVMQQVSCSRRKAVKALKESNGDLINAIMNA.

This sequence belongs to the NAC-alpha family. Part of the nascent polypeptide-associated complex (NAC), consisting of EGD2 and EGD1. NAC associates with ribosomes via EGD1.

It localises to the cytoplasm. Its subcellular location is the nucleus. Component of the nascent polypeptide-associated complex (NAC), a dynamic component of the ribosomal exit tunnel, protecting the emerging polypeptides from interaction with other cytoplasmic proteins to ensure appropriate nascent protein targeting. The NAC complex also promotes mitochondrial protein import by enhancing productive ribosome interactions with the outer mitochondrial membrane and blocks the inappropriate interaction of ribosomes translating non-secretory nascent polypeptides with translocation sites in the membrane of the endoplasmic reticulum. EGD2 may also be involved in transcription regulation. In Mycosarcoma maydis (Corn smut fungus), this protein is Nascent polypeptide-associated complex subunit alpha (EGD2).